The following is a 180-amino-acid chain: Large ribosomal subunit protein uL5 (180 aa).

The protein belongs to the universal ribosomal protein uL5 family. In terms of assembly, part of the 50S ribosomal subunit; part of the 5S rRNA/L5/L18/L25 subcomplex. Contacts the 5S rRNA and the P site tRNA. Forms a bridge to the 30S subunit in the 70S ribosome.

Its function is as follows. This is one of the proteins that bind and probably mediate the attachment of the 5S RNA into the large ribosomal subunit, where it forms part of the central protuberance. In the 70S ribosome it contacts protein S13 of the 30S subunit (bridge B1b), connecting the 2 subunits; this bridge is implicated in subunit movement. Contacts the P site tRNA; the 5S rRNA and some of its associated proteins might help stabilize positioning of ribosome-bound tRNAs. The chain is Large ribosomal subunit protein uL5 from Synechocystis sp. (strain ATCC 27184 / PCC 6803 / Kazusa).